The chain runs to 139 residues: FLYWCH family member 2 (139 aa).

Disordered stretches follow at residues 1–36 (MPQP…PRKP) and 86–139 (EAQR…STSP). A compositionally biased stretch (basic and acidic residues) spans 98–107 (PEQKRSKQNL). Residues 120 to 130 (VSSSSSEETTV) are compositionally biased toward low complexity.

This chain is FLYWCH family member 2 (Flywch2), found in Mus musculus (Mouse).